The primary structure comprises 1006 residues: Unconventional myosin-Id (1006 aa).

N-acetylalanine is present on Ala2. A Myosin motor domain is found at 9–695; that stretch reads FGKADFVLMD…TLFTLEELRA (687 aa). Residue 102–109 participates in ATP binding; it reads GESGAGKT. Ser200 is subject to Phosphoserine. Position 536 is a phosphotyrosine (Tyr536). Residues 572 to 594 form an actin-binding region; sequence MIALVDNLASKEPYYVRCIKPND. IQ domains follow at residues 699–719 and 721–741; these read VRIVLFLQKVWRGTLARMRYK and TKAALTIIRYYRRYKVKSYIH. Residues 812-1005 enclose the TH1 domain; it reads GQRADLGLQR…RSGFILSVPG (194 aa).

It belongs to the TRAFAC class myosin-kinesin ATPase superfamily. Myosin family. In terms of assembly, interacts (via the two IQ motifs) with calmodulin. Binds an additional calmodulin chain via a third, C-terminal region. Interacts with F-actin.

It is found in the cytoplasm. The protein localises to the perikaryon. It localises to the cell projection. The protein resides in the dendrite. Its subcellular location is the early endosome. It is found in the cell cortex. Functionally, unconventional myosin that functions as actin-based motor protein with ATPase activity. Plays a role in endosomal protein trafficking, and especially in the transfer of cargo proteins from early to recycling endosomes. Required for normal planar cell polarity in ciliated tracheal cells, for normal rotational polarity of cilia, and for coordinated, unidirectional ciliary movement in the trachea. Required for normal, polarized cilia organization in brain ependymal epithelial cells. The sequence is that of Unconventional myosin-Id (MYO1D) from Bos taurus (Bovine).